We begin with the raw amino-acid sequence, 664 residues long: Methionine--tRNA ligase (664 aa).

Positions 15–25 (YYPSGKAHIGH) match the 'HIGH' region motif. A 'KMSKS' region motif is present at residues 310-314 (KMSKS). ATP is bound at residue Lys313. A tRNA-binding domain is found at 563 to 664 (DFDKIDLRVA…SALPNGAKVK (102 aa)).

The protein belongs to the class-I aminoacyl-tRNA synthetase family. MetG type 2B subfamily. As to quaternary structure, homodimer.

Its subcellular location is the cytoplasm. It catalyses the reaction tRNA(Met) + L-methionine + ATP = L-methionyl-tRNA(Met) + AMP + diphosphate. Its function is as follows. Is required not only for elongation of protein synthesis but also for the initiation of all mRNA translation through initiator tRNA(fMet) aminoacylation. This is Methionine--tRNA ligase (metG) from Listeria monocytogenes serovar 1/2a (strain ATCC BAA-679 / EGD-e).